The chain runs to 254 residues: Serine acetyltransferase (254 aa).

The protein belongs to the transferase hexapeptide repeat family.

Its subcellular location is the cytoplasm. It catalyses the reaction L-serine + acetyl-CoA = O-acetyl-L-serine + CoA. It functions in the pathway amino-acid biosynthesis; L-cysteine biosynthesis; L-cysteine from L-serine: step 1/2. This chain is Serine acetyltransferase (cysE), found in Buchnera aphidicola subsp. Baizongia pistaciae (strain Bp).